A 253-amino-acid chain; its full sequence is Phosphate import ATP-binding protein PstB 1 (253 aa).

The ABC transporter domain maps to 7-248; sequence LTVSDLSLYY…PEKQETSDYI (242 aa). 39–46 lines the ATP pocket; it reads GPSGCGKS.

It belongs to the ABC transporter superfamily. Phosphate importer (TC 3.A.1.7) family. In terms of assembly, the complex is composed of two ATP-binding proteins (PstB), two transmembrane proteins (PstC and PstA) and a solute-binding protein (PstS).

The protein resides in the cell membrane. The catalysed reaction is phosphate(out) + ATP + H2O = ADP + 2 phosphate(in) + H(+). Part of the ABC transporter complex PstSACB involved in phosphate import. Responsible for energy coupling to the transport system. The chain is Phosphate import ATP-binding protein PstB 1 from Lactococcus lactis subsp. lactis (strain IL1403) (Streptococcus lactis).